A 438-amino-acid chain; its full sequence is Asparagine--tRNA ligase (438 aa).

Belongs to the class-II aminoacyl-tRNA synthetase family. In terms of assembly, homodimer.

It localises to the cytoplasm. It catalyses the reaction tRNA(Asn) + L-asparagine + ATP = L-asparaginyl-tRNA(Asn) + AMP + diphosphate + H(+). The protein is Asparagine--tRNA ligase of Thermus thermophilus (strain ATCC 27634 / DSM 579 / HB8).